A 308-amino-acid chain; its full sequence is Ribosomal protein L11 methyltransferase (308 aa).

S-adenosyl-L-methionine is bound by residues T148, G169, D191, and N239.

The protein belongs to the methyltransferase superfamily. PrmA family.

Its subcellular location is the cytoplasm. It catalyses the reaction L-lysyl-[protein] + 3 S-adenosyl-L-methionine = N(6),N(6),N(6)-trimethyl-L-lysyl-[protein] + 3 S-adenosyl-L-homocysteine + 3 H(+). Methylates ribosomal protein L11. The chain is Ribosomal protein L11 methyltransferase from Psychrobacter cryohalolentis (strain ATCC BAA-1226 / DSM 17306 / VKM B-2378 / K5).